A 67-amino-acid chain; its full sequence is Archaeal histone HAN1 subunit A (67 aa).

2 interaction with DNA regions span residues arginine 20–serine 22 and lysine 54–lysine 57.

This sequence belongs to the archaeal histone HMF family. As to quaternary structure, heterodimer. Dimers then assemble into higher oligomers, with the DNA wrapped around the protein core.

The protein resides in the cytoplasm. It is found in the chromosome. Functionally, binds and compact DNA (95 to 150 base pairs) to form nucleosome-like structures that contain positive DNA supercoils. Increases the resistance of DNA to thermal denaturation (in vitro). This chain is Archaeal histone HAN1 subunit A (han1A), found in Thermococcus zilligii.